The sequence spans 26 residues: Toxin b subunit alpha (26 aa).

Toxin b is a heterodimer composed of toxin alpha and toxin beta. In terms of tissue distribution, expressed by the venom gland.

The protein resides in the secreted. Binds to sodium channels (Nav) and affects the channel activation process. The polypeptide is Toxin b subunit alpha (Androctonus crassicauda (Arabian fat-tailed scorpion)).